A 194-amino-acid polypeptide reads, in one-letter code: Fe/S biogenesis protein NfuA (194 aa).

[4Fe-4S] cluster contacts are provided by cysteine 152 and cysteine 155.

Belongs to the NfuA family. As to quaternary structure, homodimer. [4Fe-4S] cluster serves as cofactor.

In terms of biological role, involved in iron-sulfur cluster biogenesis. Binds a 4Fe-4S cluster, can transfer this cluster to apoproteins, and thereby intervenes in the maturation of Fe/S proteins. Could also act as a scaffold/chaperone for damaged Fe/S proteins. The polypeptide is Fe/S biogenesis protein NfuA (Pseudomonas putida (strain ATCC 700007 / DSM 6899 / JCM 31910 / BCRC 17059 / LMG 24140 / F1)).